The chain runs to 262 residues: uncharacterized protein (262 aa).

The 103-residue stretch at 5–107 (PLISLDVEGV…MIEHKLRTFC (103 aa)) folds into the BTB domain. The region spanning 182-195 (ISLPRNFTHIAHVG) is the CRIB domain.

This is an uncharacterized protein from Caenorhabditis elegans.